Consider the following 239-residue polypeptide: Gamma-lactamase MBL2 (239 aa).

The Zn(2+) site is built by His56, His58, Asp60, His61, His141, and Asp165.

This sequence belongs to the metallo-beta-lactamase superfamily.

Functionally, gamma-lactamase; part of the Fusarium detoxification of benzoxazolinone cluster 2 (FDB2) involved in the degradation of benzoxazolinones produced by the host plant. Maize, wheat, and rye produce the 2 benzoxazinone phytoanticipins 2,4-dihy-droxy-7-methoxy-1,4-benzoxazin-3-one (DIMBOA) and 2,4-dihydroxy-1,4-benzoxazin-3-one (DIBOA) that, due to their inherent instability once released, spontaneously degrade to the more stable corresponding benzoxazolinones, 6-methoxy-2-benzoxazolinone (MBOA) and 2-benzoxazolinone (BOA), respectively. The first step in the detoxification of benzoxazolinones involves the hydrolysis of the cyclic ester bond of benzoxazolinones by the FDB1 cluster gamma-lactamase MBL1 to aminophenols. MBL1 is able to convert BOA into 2-aminophenol (2-AP), as well as MBOA into 5-methoxy-2-aminophenol (2-AMP). The FDB2 cluster N-malonyltransferase FDB2/NAT1 then metabolizes aminophenols via N-malonylation to non-toxic malonamic acids. FDB2/NAT1 converts 2-AP into N-(2-hydroxyphenyl) malonamic acid (HPMA) and 2-AMP into N-(2-hydroxy-4-methoxyphenyl) malonamic acid (HMPMA). The duplicated dienlactone hydrolases DLH1 and DLH2 may provide redundant function for hydrolyzing the lactone moiety in the BOA molecule. The roles of the amidases and other enzymes encoded by the 2 FDB clusters have not been identified so far. This is Gamma-lactamase MBL2 from Gibberella moniliformis (strain M3125 / FGSC 7600) (Maize ear and stalk rot fungus).